The sequence spans 377 residues: Protein MULTIPOLAR SPINDLE 1 (377 aa).

The short motif at 117–124 (LRRRFLRL) is the Nuclear localization signal element.

Expressed in roots, stems, leaves, inflorescences and seedlings. Strongly expressed in meiocytes.

Its subcellular location is the nucleus. The protein resides in the cytoplasm. The protein localises to the cytoskeleton. It is found in the spindle. Involved in meiotic spindle organization in meiocytes thus regulating chromosome segregation. Required for formation of meiotic DNA double-strand breaks (DSBs) during early recombination processes. The chain is Protein MULTIPOLAR SPINDLE 1 from Arabidopsis thaliana (Mouse-ear cress).